The primary structure comprises 381 residues: tRNA pseudouridine synthase Pus10 (381 aa).

Asp-226 serves as the catalytic Nucleophile.

Belongs to the pseudouridine synthase Pus10 family.

It carries out the reaction uridine(54) in tRNA = pseudouridine(54) in tRNA. It catalyses the reaction uridine(55) in tRNA = pseudouridine(55) in tRNA. In terms of biological role, responsible for synthesis of pseudouridine from uracil-54 and uracil-55 in the psi GC loop of transfer RNAs. The sequence is that of tRNA pseudouridine synthase Pus10 from Nitrosopumilus maritimus (strain SCM1).